We begin with the raw amino-acid sequence, 192 residues long: Mediator of RNA polymerase II transcription subunit 29 (192 aa).

Residues 32–51 (MQQQSPQQMQPAPVPQQTQQ) form a disordered region.

The protein belongs to the Mediator complex subunit 29 family. Component of the Mediator complex.

It localises to the nucleus. Component of the Mediator complex, a coactivator involved in the regulated transcription of nearly all RNA polymerase II-dependent genes. Mediator functions as a bridge to convey information from gene-specific regulatory proteins to the basal RNA polymerase II transcription machinery. Mediator is recruited to promoters by direct interactions with regulatory proteins and serves as a scaffold for the assembly of a functional preinitiation complex with RNA polymerase II and the general transcription factors. The sequence is that of Mediator of RNA polymerase II transcription subunit 29 (ix) from Bombyx mori (Silk moth).